The chain runs to 303 residues: tRNA dimethylallyltransferase 1 (303 aa).

Glycine 9–threonine 16 is a binding site for ATP. Threonine 11–threonine 16 contributes to the substrate binding site. Interaction with substrate tRNA regions lie at residues aspartate 34–leucine 37, glutamine 158–arginine 162, and arginine 239–arginine 244.

It belongs to the IPP transferase family. Monomer. Requires Mg(2+) as cofactor.

The enzyme catalyses adenosine(37) in tRNA + dimethylallyl diphosphate = N(6)-dimethylallyladenosine(37) in tRNA + diphosphate. Catalyzes the transfer of a dimethylallyl group onto the adenine at position 37 in tRNAs that read codons beginning with uridine, leading to the formation of N6-(dimethylallyl)adenosine (i(6)A). This is tRNA dimethylallyltransferase 1 from Shewanella sediminis (strain HAW-EB3).